Reading from the N-terminus, the 439-residue chain is MTTIFALCTPWGRSGVAVIRISGEDAAKAFVHFGINSSIKPRTATFTPLYDKDGEVIDEAIVVYFVAPNSFTGEDVVEFHTHGSFAVIKMILAELGKIFVPAGPGEFSLRAFLNNKVDLTRAEAIVDLINSETEMQAKQAIRQMSGVLEKLYQNWRQQLIDILSNIEAYIDFPEEVNSSAIANIDYLLNNLQKSLESHLNDDRRGERLRQGIYVTILGEPNSGKSTLFNHLAKRDIAIVSEYAGTTRDPLEAHIDVAGYPIIIIDTAGIRESTDPVEQEGIKRAKLKAENADFKIVMLPYEKRDIFNREIMSLIDDKSICILSKADNITDQKLIPVFDFSFIPISVYCNIGIENLLNLIKQKVEKDFQFCNTDPFITSERQRKHIQNTLNIIKSVDLSLPMEIVSEDLRLSVRELGKVVGVISDDDILDNVFGKFCIGK.

(6S)-5-formyl-5,6,7,8-tetrahydrofolate-binding residues include Arg-20, Glu-78, and Lys-116. Residues 211–364 (GIYVTILGEP…LLNLIKQKVE (154 aa)) form the TrmE-type G domain. GTP-binding positions include 221–226 (NSGKST), 240–246 (SEYAGTT), and 265–268 (DTAG). Ser-225 and Thr-246 together coordinate Mg(2+). Position 439 (Lys-439) interacts with (6S)-5-formyl-5,6,7,8-tetrahydrofolate.

Belongs to the TRAFAC class TrmE-Era-EngA-EngB-Septin-like GTPase superfamily. TrmE GTPase family. As to quaternary structure, homodimer. Heterotetramer of two MnmE and two MnmG subunits. The cofactor is K(+).

The protein localises to the cytoplasm. Its function is as follows. Exhibits a very high intrinsic GTPase hydrolysis rate. Involved in the addition of a carboxymethylaminomethyl (cmnm) group at the wobble position (U34) of certain tRNAs, forming tRNA-cmnm(5)s(2)U34. The polypeptide is tRNA modification GTPase MnmE (Ehrlichia chaffeensis (strain ATCC CRL-10679 / Arkansas)).